The following is a 465-amino-acid chain: Endo-1,3-1,4-beta-glycanase ExsH (465 aa).

Hemolysin-type calcium-binding repeat units lie at residues 33 to 50 (HGTA…VNVT), 105 to 122 (FGNE…TQTI), and 123 to 140 (DGRG…ADTF). The GH16 domain occupies 206 to 462 (AHQFRLSLDR…YIKAYSLDAD (257 aa)). Catalysis depends on E349, which acts as the Nucleophile. The active-site Proton donor is E354.

Belongs to the glycosyl hydrolase 16 family.

The protein localises to the secreted. Its pathway is glycan metabolism; exopolysaccharide biosynthesis. In terms of biological role, cleaves high molecular weight succinoglycan to yield LMW succinoglycan. Dynamically regulates the molecular weight distribution of succinoglycan by cleaving nascent succinoglycan only during a limited period after its synthesis, perhaps before it undergoes a time-dependent change in its conformation or aggregation state. This Rhizobium meliloti (strain 1021) (Ensifer meliloti) protein is Endo-1,3-1,4-beta-glycanase ExsH (exsH).